Consider the following 830-residue polypeptide: Probable mixed-linked glucan synthase 7 (830 aa).

Helical transmembrane passes span Leu61–Ala81 and Ala98–Leu118. Asp186 is a catalytic residue. Residues Glu251–Arg279 are a coiled coil. The substrate site is built by Asp367 and Asp369. The active site involves Asp529. 6 consecutive transmembrane segments (helical) span residues Leu613 to Trp633, Thr638 to Leu658, Phe676 to Val696, Ala735 to Gly755, Leu776 to Met796, and Pro805 to Leu825.

This sequence belongs to the glycosyltransferase 2 family. Plant cellulose synthase-like F subfamily. In terms of tissue distribution, expressed in mature pollen.

It is found in the golgi apparatus membrane. Functionally, may catalyze both beta-1,3 and beta-1,4 glycosidic linkage on beta-D-glucan. Essential for (1,3;1,4)-beta-D-glucans synthesis in grasses and cereals (Poaceae). The mixed-linked glucans (which are not present in walls of dicotyledons or most other monocotyledonous plants) are particularly important constituents of the walls of the starchy endosperm and aleurone cells of cereal grains such as oats, wheat, rice and barley. They can account for up to 70% by weight of the wall. This Oryza sativa subsp. japonica (Rice) protein is Probable mixed-linked glucan synthase 7 (CSLF7).